The following is a 469-amino-acid chain: MWKEKVQEYEGQIIDDLKGLLSIESVRDDSKASDETPVGPGPRQALDYMYEIAQRDGFSTHDVDHIAGRIEAGKGDDVLGVLCHVDVVPAGDGWDSDPFNPVVTDDAIIARGTLDDKGPTIAAYYAVKILNDMKVDWKKRIHIIIGTDEESDWKCTERYFQTEEMPTLGFAPDAEFPAIHGEKGITTFDLVQNSTSEDQDEPDYELISFESGQRYNMVPDHAQARVFVKENMTDVVQHFEHYLDQHKLQGESVVDSGELVLTLEGKAVHGMDPSLGVNAGLYLLDFISTLNLNQTAREFVDFSNRYLHESHFGEKMGMKFHTDVMGDVTTNVGIISYDNKQGGRFGINLRYPQKFEFEEAIQRFTKEIKAYGFDLELGKVQQPHFVDKNDPFVQKLVKAYRNQTGDMSEPYTIGGGTYARNLDKGVAFGAMFEDSEDLMHQKNEYITKKQLFNATSIYLEAIYSLCVEG.

Residue histidine 84 participates in Zn(2+) binding. Aspartate 86 is a catalytic residue. Position 115 (aspartate 115) interacts with Zn(2+). The Proton acceptor role is filled by glutamate 149. Zn(2+)-binding residues include glutamate 150, aspartate 173, and histidine 440.

Belongs to the peptidase M20A family. The cofactor is Zn(2+).

This chain is Putative dipeptidase SH1171, found in Staphylococcus haemolyticus (strain JCSC1435).